A 337-amino-acid polypeptide reads, in one-letter code: Methylthioribose-1-phosphate isomerase (337 aa).

Substrate is bound by residues 47–49 (RGA), R81, and Q184. The active-site Proton donor is the D225. 235–236 (NK) contributes to the substrate binding site.

The protein belongs to the eIF-2B alpha/beta/delta subunits family. MtnA subfamily.

The enzyme catalyses 5-(methylsulfanyl)-alpha-D-ribose 1-phosphate = 5-(methylsulfanyl)-D-ribulose 1-phosphate. The protein operates within amino-acid biosynthesis; L-methionine biosynthesis via salvage pathway; L-methionine from S-methyl-5-thio-alpha-D-ribose 1-phosphate: step 1/6. Its function is as follows. Catalyzes the interconversion of methylthioribose-1-phosphate (MTR-1-P) into methylthioribulose-1-phosphate (MTRu-1-P). The protein is Methylthioribose-1-phosphate isomerase of Synechococcus sp. (strain CC9605).